The sequence spans 122 residues: Large ribosomal subunit protein uL14 (122 aa).

The protein belongs to the universal ribosomal protein uL14 family. As to quaternary structure, part of the 50S ribosomal subunit. Forms a cluster with proteins L3 and L19. In the 70S ribosome, L14 and L19 interact and together make contacts with the 16S rRNA in bridges B5 and B8.

Functionally, binds to 23S rRNA. Forms part of two intersubunit bridges in the 70S ribosome. This Agathobacter rectalis (strain ATCC 33656 / DSM 3377 / JCM 17463 / KCTC 5835 / VPI 0990) (Eubacterium rectale) protein is Large ribosomal subunit protein uL14.